The following is a 523-amino-acid chain: Heparanase (523 aa).

Residues 1 to 18 form the signal peptide; it reads MLVLLLLVLLLAVPPRRT. Heparan sulfate group contacts are provided by residues 42–44, threonine 77, and 137–141; these read DAS and KKHKN. Residues asparagine 141 and asparagine 196 are each glycosylated (N-linked (GlcNAc...) asparagine). Catalysis depends on glutamate 204, which acts as the Proton donor. Heparan sulfate group-binding positions include 250–260, histidine 276, and arginine 283; that span reads QPRKHTQHLLR. A required for heterodimerization with the heparanase 8 kDa subunit region spans residues 268 to 397; the sequence is KAIDSVTWHH…LLYKRLVGTR (130 aa). Glutamate 323 functions as the Nucleophile in the catalytic mechanism. Residues 328 to 330 and 369 to 371 each bind heparan sulfate group; these read YGG and GSY. Cysteine 417 and cysteine 522 form a disulfide bridge. Residues asparagine 436 and asparagine 439 are each glycosylated (N-linked (GlcNAc...) asparagine). A required for transferring proheparanase to the Golgi apparatus, secretion and subsequent enzyme activity and for enhancement of PKB/AKT1 phosphorylation region spans residues 507–523; that stretch reads FSYGFYVIRNAKAIACI.

Belongs to the glycosyl hydrolase 79 family. Heterodimer; the active enzyme is a heterodimer of the 60 kDa and 45 kDa proteolytic products. N-glycosylated. In terms of processing, proteolytically cleaved to produce a 60 kDa and a 45 kDa product.

It localises to the secreted. It carries out the reaction endohydrolysis of (1-&gt;4)-beta-D-glycosidic bonds of heparan sulfate chains in heparan sulfate proteoglycan.. Functionally, endoglycosidase that cleaves heparan sulfate proteoglycans (HSPGs) into heparan sulfate side chains and core proteoglycans. Participates in extracellular matrix (ECM) degradation and remodeling. Selectively cleaves the linkage between a glucuronic acid unit and an N-sulfo glucosamine unit carrying either a 3-O-sulfo or a 6-O-sulfo group. Can also cleave the linkage between a glucuronic acid unit and an N-sulfo glucosamine unit carrying a 2-O-sulfo group, but not linkages between a glucuronic acid unit and a 2-O-sulfated iduronic acid moiety. Increases cell adhesion to the extracellular matrix (ECM), independent of its enzymatic activity. This chain is Heparanase (HPSE), found in Gallus gallus (Chicken).